Reading from the N-terminus, the 338-residue chain is Phenylalanine--tRNA ligase alpha subunit (338 aa).

Residues 71 to 101 (QFEEKRSSLSQQTSSSDTYQSLPDLTLPGRQ) are disordered. Residues 78 to 92 (SLSQQTSSSDTYQSL) show a composition bias toward low complexity. Glu253 is a binding site for Mg(2+).

Belongs to the class-II aminoacyl-tRNA synthetase family. Phe-tRNA synthetase alpha subunit type 1 subfamily. Tetramer of two alpha and two beta subunits. Mg(2+) is required as a cofactor.

The protein localises to the cytoplasm. It carries out the reaction tRNA(Phe) + L-phenylalanine + ATP = L-phenylalanyl-tRNA(Phe) + AMP + diphosphate + H(+). This is Phenylalanine--tRNA ligase alpha subunit from Desulfotalea psychrophila (strain LSv54 / DSM 12343).